The following is a 302-amino-acid chain: Rab effector Noc2 (302 aa).

The 118-residue stretch at 41-158 (QRRTQCLSPG…KRSGAWFYKG (118 aa)) folds into the RabBD domain. The FYVE-type zinc finger occupies 89-146 (GNGVSQCLLCGEMLGFLGSSSVFCKDCRKKVCTKCGIEASPGQKRPLWLCKICSEQRE). The Zn(2+) site is built by Cys-95, Cys-98, Cys-112, Cys-115, Cys-120, Cys-123, Cys-138, and Cys-141. Disordered stretches follow at residues 174 to 194 (DPHF…SAEV) and 206 to 302 (VSSD…TTHY). Residue Ser-248 is modified to Phosphoserine. Residues 258-269 (SHLSGSQSSLGS) show a composition bias toward low complexity.

Recruited to dense-core vesicles through specific interaction with RAB27A in endocrine cells. Interacts with RAB3A, RAB3B, RAB3C and RAB3D. Interacts with ZYX. Highly expressed in pancreatic islets and parotid. High to moderate expression in adrenal gland, pituitary gland and ovary.

The protein localises to the cytoplasm. It is found in the cytoplasmic vesicle. It localises to the secretory vesicle membrane. In terms of biological role, rab GTPase effector involved in the late steps of regulated exocytosis, both in endocrine and exocrine cells. Regulates the exocytosis of dense-core vesicles in neuroendocrine cells through interaction with RAB27A. Acts as a potential RAB3B effector protein in epithelial cells. In Rattus norvegicus (Rat), this protein is Rab effector Noc2 (Rph3al).